A 273-amino-acid chain; its full sequence is Large ribosomal subunit protein uL2 (273 aa).

2 disordered regions span residues 35 to 54 and 222 to 273; these read DSKS…TRHI and GMAM…RRNK. Residues 39 to 49 show a composition bias toward polar residues; that stretch reads KSGGRNNNGRI. Residues 229–239 show a composition bias toward basic and acidic residues; it reads DHPHGGGEGRN. Residues 253–273 are compositionally biased toward basic residues; it reads KGFKTRKNKRTDKYIVRRRNK.

This sequence belongs to the universal ribosomal protein uL2 family. In terms of assembly, part of the 50S ribosomal subunit. Forms a bridge to the 30S subunit in the 70S ribosome.

One of the primary rRNA binding proteins. Required for association of the 30S and 50S subunits to form the 70S ribosome, for tRNA binding and peptide bond formation. It has been suggested to have peptidyltransferase activity; this is somewhat controversial. Makes several contacts with the 16S rRNA in the 70S ribosome. This is Large ribosomal subunit protein uL2 from Aeromonas salmonicida (strain A449).